The chain runs to 248 residues: Adenylate kinase (248 aa).

Position 37–42 (37–42 (GAGKGT)) interacts with ATP. The NMP stretch occupies residues 57–86 (SPGNLLREEMNRNSPITAQIKDYVSKGQLV). Residues Arg-63, 84 to 86 (QLV), 111 to 114 (GFPR), and Gln-118 contribute to the AMP site. The segment at 149 to 181 (GRRFDPITGNTYHIIYDPPPPDIADRVVVRTDD) is LID. Position 150 (Arg-150) interacts with ATP. The AMP site is built by Arg-178 and Arg-189.

This sequence belongs to the adenylate kinase family. Monomer.

The protein resides in the cytoplasm. It catalyses the reaction AMP + ATP = 2 ADP. Catalyzes the reversible transfer of the terminal phosphate group between ATP and AMP. Plays an important role in cellular energy homeostasis and in adenine nucleotide metabolism. This is Adenylate kinase from Giardia intestinalis (Giardia lamblia).